Here is a 372-residue protein sequence, read N- to C-terminus: Glutamate 5-kinase (372 aa).

Position 14 (lysine 14) interacts with ATP. Substrate is bound by residues serine 54, aspartate 141, and asparagine 153. 173–174 (TD) serves as a coordination point for ATP. Residues 280–358 (RGHVVIDAGA…GEIETVLGYM (79 aa)) form the PUA domain.

The protein belongs to the glutamate 5-kinase family.

The protein localises to the cytoplasm. It catalyses the reaction L-glutamate + ATP = L-glutamyl 5-phosphate + ADP. The protein operates within amino-acid biosynthesis; L-proline biosynthesis; L-glutamate 5-semialdehyde from L-glutamate: step 1/2. Catalyzes the transfer of a phosphate group to glutamate to form L-glutamate 5-phosphate. The polypeptide is Glutamate 5-kinase (Burkholderia mallei (strain NCTC 10229)).